Here is a 51-residue protein sequence, read N- to C-terminus: FVBQHLCGSHLVEALYLVCGERGFFYTPKSGIVDQCCTSICSLYQLENYCN.

Intrachain disulfides connect cysteine 7–cysteine 37, cysteine 19–cysteine 50, and cysteine 36–cysteine 41.

It belongs to the insulin family. Heterodimer of a B chain and an A chain linked by two disulfide bonds.

Its subcellular location is the secreted. Insulin decreases blood glucose concentration. It increases cell permeability to monosaccharides, amino acids and fatty acids. It accelerates glycolysis, the pentose phosphate cycle, and glycogen synthesis in liver. In Acomys cahirinus (Cairo spiny mouse), this protein is Insulin (INS).